Reading from the N-terminus, the 111-residue chain is Heavy metal-associated isoprenylated plant protein 10 (111 aa).

The region spanning 1–68 is the HMA domain; that stretch reads MQETVVFEWG…ICDYVDITAV (68 aa). The tract at residues 68-111 is disordered; it reads VGPEGQPAQNRNPVKKPEPKVIRGRPYPPQKKTPGKNSDECIIL. Cysteine methyl ester is present on Cys-108. A lipid anchor (S-farnesyl cysteine) is attached at Cys-108. Positions 109 to 111 are cleaved as a propeptide — removed in mature form; sequence IIL.

This sequence belongs to the HIPP family.

In terms of biological role, probable heavy-metal-binding protein. The sequence is that of Heavy metal-associated isoprenylated plant protein 10 from Arabidopsis thaliana (Mouse-ear cress).